The sequence spans 64 residues: Anti-sigma-G factor Gin (64 aa).

Residues Cys11, Cys14, Cys30, and Cys33 each coordinate Zn(2+).

As to quaternary structure, probably functions as a homodimer. Interacts with sigma-G factor, recognition occurs via the first 71 residues of sigma-G. The cofactor is Zn(2+).

Functionally, an anti-sigma-G factor, prevents premature activation of sigma-G factor in the forespore; overexpression leads to 1000-fold reduction in spore formation, spore formation stops after engulfment. Overexpression also inhibits sigma-G transcription activation activity. When both Gin and sigma-G are expressed in E.coli Gin inhibits sigma-G, strongly suggesting Gin inhibits by direct physical interaction. The chain is Anti-sigma-G factor Gin from Bacillus subtilis (strain 168).